Consider the following 341-residue polypeptide: Retinol dehydrogenase 10 (341 aa).

Residues 3 to 23 (IVVEFFLVTFKVLWAFVLAAA) traverse the membrane as a helical; Signal-anchor segment. 40–64 (LITGAGSGLGRLFALEFARRRALLV) contributes to the NADP(+) binding site. Position 197 (Ser197) interacts with substrate. Catalysis depends on Tyr210, which acts as the Proton acceptor.

Belongs to the short-chain dehydrogenases/reductases (SDR) family. As to expression, detected in retina, entire eyecups and in liver (at protein level).

The protein resides in the microsome membrane. It localises to the endoplasmic reticulum membrane. It catalyses the reaction all-trans-retinol + NADP(+) = all-trans-retinal + NADPH + H(+). The protein operates within cofactor metabolism; retinol metabolism. Its function is as follows. Retinol dehydrogenase with a clear preference for NADP. Converts all-trans-retinol to all-trans-retinal. The protein is Retinol dehydrogenase 10 (Rdh10) of Rattus norvegicus (Rat).